A 101-amino-acid chain; its full sequence is Protein S100-A4 (101 aa).

Ala2 carries the post-translational modification N-acetylalanine. 2 EF-hand domains span residues 12 to 47 (IVSTFHKYSGNEGDKFKLNKTELKELLTRELPSFLG) and 50 to 85 (TDEAAFQKLMNNLDSNRDNEVDFQEYCVFLSCIAMM). Ca(2+) contacts are provided by Lys28 and Glu33. At Lys35 the chain carries N6-acetyllysine. Residues Asp63, Asn65, Asp67, Glu69, and Glu74 each contribute to the Ca(2+) site.

This sequence belongs to the S-100 family. As to quaternary structure, homodimer. Interacts with PPFIBP1 in a calcium-dependent mode. Interacts with PGLYRP1; this complex acts as a chemoattractant that promotes lymphocyte movement. Interacts with MYH9; this interaction increases cell motility. Interacts with Annexin 2/ANXA2. Interacts with TP53; this interaction promotes TP53 degradation. Interacts with CCR5 and CXCR3. Interacts with FCGR3A; this interaction inhibits PKC-dependent phosphorylation of FCGR3A.

It localises to the secreted. Its subcellular location is the nucleus. It is found in the cytoplasm. In terms of biological role, calcium-binding protein that plays a role in various cellular processes including motility, angiogenesis, cell differentiation, apoptosis, and autophagy. Increases cell motility and invasiveness by interacting with non-muscle myosin heavy chain (NMMHC) IIA/MYH9. Mechanistically, promotes filament depolymerization and increases the amount of soluble myosin-IIA, resulting in the formation of stable protrusions facilitating chemotaxis. Also modulates the pro-apoptotic function of TP53 by binding to its C-terminal transactivation domain within the nucleus and reducing its protein levels. Within the extracellular space, stimulates cytokine production including granulocyte colony-stimulating factor and CCL24 from T-lymphocytes. In addition, stimulates T-lymphocyte chemotaxis by acting as a chemoattractant complex with PGLYRP1 that promotes lymphocyte migration via CCR5 and CXCR3 receptors. The sequence is that of Protein S100-A4 (S100a4) from Rattus norvegicus (Rat).